The primary structure comprises 172 residues: MERAEKREFVTELNEVFKASGSVVVAHYAGVTVAQMNDFRSKMRAAGGTVRVAKNRLAKIALQGTESEGMTDLFKGQTLIAFSEDPVTAPKVVMDFAKTNDKLVVLGGAMGATTLNAEGVKSLATLPSLDELRAKLLGLINAPATRVATVVAAPASQLARVFSAYAKKDEAA.

It belongs to the universal ribosomal protein uL10 family. Part of the ribosomal stalk of the 50S ribosomal subunit. The N-terminus interacts with L11 and the large rRNA to form the base of the stalk. The C-terminus forms an elongated spine to which L12 dimers bind in a sequential fashion forming a multimeric L10(L12)X complex.

Forms part of the ribosomal stalk, playing a central role in the interaction of the ribosome with GTP-bound translation factors. The chain is Large ribosomal subunit protein uL10 from Rhizobium meliloti (strain 1021) (Ensifer meliloti).